The following is a 442-amino-acid chain: UDP-N-acetylmuramoylalanine--D-glutamate ligase (442 aa).

Residue 115 to 121 participates in ATP binding; that stretch reads GSNGKST.

The protein belongs to the MurCDEF family.

It localises to the cytoplasm. It catalyses the reaction UDP-N-acetyl-alpha-D-muramoyl-L-alanine + D-glutamate + ATP = UDP-N-acetyl-alpha-D-muramoyl-L-alanyl-D-glutamate + ADP + phosphate + H(+). It functions in the pathway cell wall biogenesis; peptidoglycan biosynthesis. Cell wall formation. Catalyzes the addition of glutamate to the nucleotide precursor UDP-N-acetylmuramoyl-L-alanine (UMA). This chain is UDP-N-acetylmuramoylalanine--D-glutamate ligase, found in Aliivibrio salmonicida (strain LFI1238) (Vibrio salmonicida (strain LFI1238)).